A 424-amino-acid chain; its full sequence is Serine--tRNA ligase (424 aa).

Residue T231–E233 participates in L-serine binding. R261–E263 contacts ATP. E284 serves as a coordination point for L-serine. Position 348–351 (E348–S351) interacts with ATP. Residue S383 participates in L-serine binding.

It belongs to the class-II aminoacyl-tRNA synthetase family. Type-1 seryl-tRNA synthetase subfamily. As to quaternary structure, homodimer. The tRNA molecule binds across the dimer.

It is found in the cytoplasm. It catalyses the reaction tRNA(Ser) + L-serine + ATP = L-seryl-tRNA(Ser) + AMP + diphosphate + H(+). The catalysed reaction is tRNA(Sec) + L-serine + ATP = L-seryl-tRNA(Sec) + AMP + diphosphate + H(+). It functions in the pathway aminoacyl-tRNA biosynthesis; selenocysteinyl-tRNA(Sec) biosynthesis; L-seryl-tRNA(Sec) from L-serine and tRNA(Sec): step 1/1. Its function is as follows. Catalyzes the attachment of serine to tRNA(Ser). Is also able to aminoacylate tRNA(Sec) with serine, to form the misacylated tRNA L-seryl-tRNA(Sec), which will be further converted into selenocysteinyl-tRNA(Sec). This chain is Serine--tRNA ligase, found in Metamycoplasma arthritidis (strain 158L3-1) (Mycoplasma arthritidis).